A 545-amino-acid polypeptide reads, in one-letter code: Pectinesterase/pectinesterase inhibitor (545 aa).

A signal peptide spans 1–37 (MEINQPNLLEASKSCYSKITFFLLVISFAALVSTGFS). The tract at residues 38–191 (SPELSLHHKI…ILRARTSLAI (154 aa)) is pectinesterase inhibitor. A propeptide spanning residues 38–228 (SPELSLHHKI…RRLLQTLGKD (191 aa)) is cleaved from the precursor. Asn-135 carries N-linked (GlcNAc...) asparagine glycosylation. Positions 232–530 (DIVVAKDGSG…TVAELIQGGS (299 aa)) are pectinesterase. Substrate-binding residues include Thr-307 and Gln-337. A disulfide bond links Cys-326 and Cys-353. The Proton donor; for pectinesterase activity role is filled by Asp-360. An N-linked (GlcNAc...) (complex) asparagine glycan is attached at Asn-375. Asp-381 acts as the Nucleophile; for pectinesterase activity in catalysis. A disulfide bridge links Cys-394 with Cys-428. 2 residues coordinate substrate: Arg-449 and Trp-451.

It in the N-terminal section; belongs to the PMEI family. In the C-terminal section; belongs to the pectinesterase family. Post-translationally, N-glycosylated.

It localises to the secreted. The protein resides in the cell wall. It catalyses the reaction [(1-&gt;4)-alpha-D-galacturonosyl methyl ester](n) + n H2O = [(1-&gt;4)-alpha-D-galacturonosyl](n) + n methanol + n H(+). Its pathway is glycan metabolism; pectin degradation; 2-dehydro-3-deoxy-D-gluconate from pectin: step 1/5. Functionally, acts in the modification of cell walls via demethylesterification of cell wall pectin. This chain is Pectinesterase/pectinesterase inhibitor, found in Ficus pumila var. awkeotsang (Jelly fig).